Consider the following 177-residue polypeptide: Voltage-dependent L-type calcium channel subunit alpha-1C (177 aa).

The chain crosses the membrane as a helical span at residues 27–45 (ITFFRLFRVMRLVKLLSRG). A helical transmembrane segment spans residues 64–84 (YVALLIVMLFFIYAVIGMQVF). N-linked (GlcNAc...) asparagine glycosylation is present at asparagine 90. The segment at residues 107–125 (AVLLLFRCATGEAWQEIML) is an intramembrane region (pore-forming). Positions 116 to 119 (TGEA) match the Selectivity filter of repeat IV motif. A disulfide bond links cysteine 133 and cysteine 149. N-linked (GlcNAc...) asparagine glycosylation occurs at asparagine 141. A helical membrane pass occupies residues 154 to 177 (AVFYFISFYMLCAFLIIDLFVAVI).

Belongs to the calcium channel alpha-1 subunit (TC 1.A.1.11) family. CACNA1C subfamily. In terms of assembly, component of a calcium channel complex consisting of a pore-forming alpha subunit (CACNA1C) and ancillary beta, gamma and delta subunits. The channel complex contains alpha, beta, gamma and delta subunits in a 1:1:1:1 ratio, i.e. it contains only one of each type of subunit. CACNA1C channel activity is modulated by ancillary subunits, such as CACNB2, CACNB3, CACNA2D1 and CACNA2D4. Post-translationally, phosphorylation by PKA activates the channel.

It localises to the cell membrane. Its subcellular location is the perikaryon. The protein resides in the postsynaptic density membrane. It is found in the cell projection. The protein localises to the dendrite. It localises to the sarcolemma. Its subcellular location is the T-tubule. It carries out the reaction Ca(2+)(in) = Ca(2+)(out). With respect to regulation, inhibited by dihydropyridines (DHP), such as isradipine. Channel activity is regulated by Ca(2+) and calmodulin. Its function is as follows. Pore-forming, alpha-1C subunit of the voltage-gated calcium channel that gives rise to L-type calcium currents. Mediates influx of calcium ions into the cytoplasm, and thereby triggers calcium release from the sarcoplasm. Plays an important role in excitation-contraction coupling in the heart. Required for normal heart development and normal regulation of heart rhythm. Required for normal contraction of smooth muscle cells in blood vessels and in the intestine. Essential for normal blood pressure regulation via its role in the contraction of arterial smooth muscle cells. Long-lasting (L-type) calcium channels belong to the 'high-voltage activated' (HVA) group. The chain is Voltage-dependent L-type calcium channel subunit alpha-1C (CACNA1C) from Gallus gallus (Chicken).